The chain runs to 233 residues: Cytidylate kinase (233 aa).

15–23 (GPSGAGKST) contributes to the ATP binding site. Positions 183–201 (RRDEQDSGREHAPLRRADD) are enriched in basic and acidic residues. Positions 183 to 202 (RRDEQDSGREHAPLRRADDA) are disordered.

Belongs to the cytidylate kinase family. Type 1 subfamily.

The protein resides in the cytoplasm. The enzyme catalyses CMP + ATP = CDP + ADP. It catalyses the reaction dCMP + ATP = dCDP + ADP. This is Cytidylate kinase from Geobacter sulfurreducens (strain ATCC 51573 / DSM 12127 / PCA).